The following is a 79-amino-acid chain: Exodeoxyribonuclease 7 small subunit (79 aa).

It belongs to the XseB family. Heterooligomer composed of large and small subunits.

The protein localises to the cytoplasm. The enzyme catalyses Exonucleolytic cleavage in either 5'- to 3'- or 3'- to 5'-direction to yield nucleoside 5'-phosphates.. Bidirectionally degrades single-stranded DNA into large acid-insoluble oligonucleotides, which are then degraded further into small acid-soluble oligonucleotides. The sequence is that of Exodeoxyribonuclease 7 small subunit from Dechloromonas aromatica (strain RCB).